We begin with the raw amino-acid sequence, 191 residues long: Stress response regulator protein 1 (191 aa).

The Response regulatory domain maps to 62-181; that stretch reads SFLLVDDNEI…TNYILQKIEQ (120 aa). D114 carries the 4-aspartylphosphate modification.

Its function is as follows. Required for stress adaptation, morphogenesis and virulence. This is Stress response regulator protein 1 (SRR1) from Clavispora lusitaniae (strain ATCC 42720) (Yeast).